A 435-amino-acid chain; its full sequence is Ribulose bisphosphate carboxylase-like protein (435 aa).

Mg(2+)-binding residues include K198, D200, and E201. The residue at position 198 (K198) is an N6-carboxylysine.

It belongs to the RuBisCO large chain family. Type IV subfamily. As to quaternary structure, homodimer. It depends on Mg(2+) as a cofactor.

In terms of biological role, may be involved in sulfur metabolism and oxidative stress response. Does not show RuBisCO activity. The chain is Ribulose bisphosphate carboxylase-like protein from Chlorobaculum tepidum (strain ATCC 49652 / DSM 12025 / NBRC 103806 / TLS) (Chlorobium tepidum).